Reading from the N-terminus, the 493-residue chain is Glycerol kinase (493 aa).

An ADP-binding site is contributed by T13. T13, T14, and S15 together coordinate ATP. T13 serves as a coordination point for sn-glycerol 3-phosphate. Residue R17 coordinates ADP. Positions 83, 84, 135, and 244 each coordinate sn-glycerol 3-phosphate. Glycerol contacts are provided by R83, E84, Y135, D244, and Q245. Positions 266 and 309 each coordinate ADP. Residues T266, G309, Q313, and G410 each contribute to the ATP site. Positions 410 and 414 each coordinate ADP.

This sequence belongs to the FGGY kinase family.

The enzyme catalyses glycerol + ATP = sn-glycerol 3-phosphate + ADP + H(+). Its pathway is polyol metabolism; glycerol degradation via glycerol kinase pathway; sn-glycerol 3-phosphate from glycerol: step 1/1. Its activity is regulated as follows. Inhibited by fructose 1,6-bisphosphate (FBP). In terms of biological role, key enzyme in the regulation of glycerol uptake and metabolism. Catalyzes the phosphorylation of glycerol to yield sn-glycerol 3-phosphate. This Shewanella halifaxensis (strain HAW-EB4) protein is Glycerol kinase.